A 547-amino-acid polypeptide reads, in one-letter code: Myrosinase 2 (547 aa).

The first 28 residues, 1–28 (MQHNTYIYILTMKLLGFALAILLVVATC), serve as a signal peptide directing secretion. 3 disulfide bridges follow: C36–C460, C44–C456, and C236–C244. Residues Q69, H171, and 216 to 217 (NQ) each bind a beta-D-glucoside. N340 is a glycosylation site (N-linked (GlcNAc...) asparagine). An a beta-D-glucoside-binding site is contributed by Y359. Residue N384 is glycosylated (N-linked (GlcNAc...) asparagine). A beta-D-glucoside-binding positions include E430, W479, 486–487 (EF), and F495. The active-site Nucleophile is the E430. N504 carries an N-linked (GlcNAc...) asparagine glycan.

It belongs to the glycosyl hydrolase 1 family. In terms of assembly, interacts with MVP1. As to expression, expressed in phloem-associated cells.

It carries out the reaction a thioglucoside + H2O = a sugar + a thiol.. Its function is as follows. May degrade glucosinolates (glucose residue linked by a thioglucoside bound to an amino acid derivative) to glucose, sulfate and any of the products: thiocyanates, isothiocyanates, nitriles, epithionitriles or oxazolidine-2-thiones. These toxic degradation products can deter insect herbivores. Seems to function in abscisic acid (ABA) and methyl jasmonate (MeJA) signaling in guard cells. Functionally redundant with TGG1. The polypeptide is Myrosinase 2 (Arabidopsis thaliana (Mouse-ear cress)).